Consider the following 114-residue polypeptide: MTSFAQLDIKSEELAIVKTILQQLVPDYTVWAFGSRVKGKAKKYSDLDLAIISEEPLDFLARDRLKEAFSESDLPWRVDLLDWATTSEDFREIIRKVYVVIQEKEKTVEKPTAL.

A GSX(10)DXD motif motif is present at residues 34-48; that stretch reads GSRVKGKAKKYSDLD. Residues Asp46 and Asp48 contribute to the active site. Mg(2+) is bound by residues Asp46, Asp48, Glu67, Glu71, and Asp79.

It belongs to the MntA antitoxin family. Forms a complex with HepT, probably with a stoichiometry of 2:2. The cofactor is Mg(2+).

The catalysed reaction is L-tyrosyl-[protein] + ATP = O-(5'-adenylyl)-L-tyrosyl-[protein] + diphosphate. It carries out the reaction O-(5'-adenylyl)-L-tyrosyl-[protein] + ATP = O-[5'-(adenylyl-(5'-&gt;3')-adenylyl)]-L-tyrosyl-[protein] + diphosphate. Probable antitoxin component of a type VII toxin-antitoxin (TA) system. Neutralizes cognate toxic HEPN probably by di-AMPylation. A mixture of HepT and MntA binds nucleotides; the highest affinity is for TTP, ATP binds more tightly than ADP or AMP. The polypeptide is Probable protein adenylyltransferase MntA (mntA) (Haemophilus influenzae (strain ATCC 51907 / DSM 11121 / KW20 / Rd)).